The following is a 62-amino-acid chain: Small EDRK-rich factor 1 (62 aa).

Composition is skewed to basic and acidic residues over residues 1–30 (MARG…KEDS) and 50–62 (AANE…TREK). The segment at 1 to 62 (MARGNQRELA…ERKSMQTREK (62 aa)) is disordered.

This sequence belongs to the SERF family. Interacts with SNCA; this interaction promotes the aggregation of SNCA.

Its subcellular location is the cytoplasm. It is found in the cytosol. The protein localises to the nucleus. In terms of biological role, positive regulator of amyloid protein aggregation and proteotoxicity. Induces conformational changes in amyloid proteins, such as APP, HTT, and SNCA, driving them into compact formations preceding the formation of aggregates. The chain is Small EDRK-rich factor 1 (SERF1) from Bos taurus (Bovine).